The sequence spans 218 residues: Thiopurine S-methyltransferase (218 aa).

Residues W10, L45, E66, and R123 each coordinate S-adenosyl-L-methionine.

Belongs to the class I-like SAM-binding methyltransferase superfamily. TPMT family.

It localises to the cytoplasm. It carries out the reaction S-adenosyl-L-methionine + a thiopurine = S-adenosyl-L-homocysteine + a thiopurine S-methylether.. This is Thiopurine S-methyltransferase from Shewanella loihica (strain ATCC BAA-1088 / PV-4).